Reading from the N-terminus, the 765-residue chain is Transcription factor RFX3 (765 aa).

A DNA-binding region (RFX-type winged-helix) is located at residues 189–264; sequence HLQWLLDNYE…YHYYGIRVKP (76 aa).

This sequence belongs to the RFX family.

It is found in the nucleus. In terms of biological role, transcription factor required for ciliogenesis and islet cell differentiation during endocrine pancreas development. The protein is Transcription factor RFX3 (rfx3) of Danio rerio (Zebrafish).